Consider the following 744-residue polypeptide: Tripartite motif-containing protein 2 (744 aa).

Residue Ser-10 is modified to Phosphoserine. Residues 23-64 (CSICLERYKNPKVLPCLHTFCERCLQNYIPAHSLTLSCPVCR) form an RING-type zinc finger. A B box-type zinc finger spans residues 113–154 (GKPLSCPNHDGNVMEFYCQSCETAMCRECTEGEHAEHPTVPL). Positions 118, 121, 141, and 146 each coordinate Zn(2+). Residues 320–421 (TTNAVASETV…IRGSPFKLKV (102 aa)) form a Filamin repeat. Thr-371 carries the post-translational modification Phosphothreonine. A phosphoserine mark is found at Ser-375, Ser-424, and Ser-428. A disordered region spans residues 432 to 462 (EGVKRRVKSPGSGHVKQKAVKRPASMYSTGK). NHL repeat units follow at residues 473–516 (IFRV…FSND), 520–563 (KSRF…FSND), 564–605 (GKFK…FQPN), 609–652 (VTRF…FNQE), 656–699 (MLKF…FDGS), and 700–743 (GSFL…YRYL).

It belongs to the TRIM/RBCC family. Forms homooligomers. Interacts with TRIM3; this interaction reduces TRIM2 activity. Interacts with myosin V; myosin V may not be a substrate for ubiquitination. Interacts with NEFL. Interacts with phosphorylated BCL2L11. Interacts with SIRPA. RING-type zinc finger-dependent and UBE2D1-dependent autoubiquitination.

It carries out the reaction S-ubiquitinyl-[E2 ubiquitin-conjugating enzyme]-L-cysteine + [acceptor protein]-L-lysine = [E2 ubiquitin-conjugating enzyme]-L-cysteine + N(6)-ubiquitinyl-[acceptor protein]-L-lysine.. Its pathway is protein modification; protein ubiquitination. Functionally, UBE2D1-dependent E3 ubiquitin-protein ligase that mediates the ubiquitination of NEFL and of phosphorylated BCL2L11. Plays a neuroprotective function. May play a role in neuronal rapid ischemic tolerance. Plays a role in antiviral immunity and limits New World arenavirus infection independently of its ubiquitin ligase activity. This Rattus norvegicus (Rat) protein is Tripartite motif-containing protein 2 (Trim2).